Reading from the N-terminus, the 286-residue chain is KH domain-containing protein At2g38610 (286 aa).

S2 bears the N-acetylserine mark. In terms of domain architecture, KH spans 141–208 (EIPVDNYPNF…EHLNEQLHIL (68 aa)). Residues 256–286 (SNNLREESPGPSGGGSVSPFNSSGKRPKTGC) form a disordered region. Phosphoserine occurs at positions 263 and 273.

It is found in the nucleus. In Arabidopsis thaliana (Mouse-ear cress), this protein is KH domain-containing protein At2g38610.